A 206-amino-acid chain; its full sequence is Protease (206 aa).

Residues His-55, Asp-72, and Cys-122 contribute to the active site.

Belongs to the peptidase C5 family. As to quaternary structure, interacts with protease cofactor pVI-C; this interaction is necessary for protease activation.

The protein localises to the virion. The protein resides in the host nucleus. It carries out the reaction Cleaves proteins of the adenovirus and its host cell at two consensus sites: -Yaa-Xaa-Gly-Gly-|-Xaa- and -Yaa-Xaa-Gly-Xaa-|-Gly- (in which Yaa is Met, Ile or Leu, and Xaa is any amino acid).. Requires DNA and protease cofactor for maximal activation. Inside nascent virions, becomes partially activated by binding to the viral DNA, allowing it to cleave the cofactor that binds to the protease and fully activates it. Actin, like the viral protease cofactor, seems to act as a cofactor in the cleavage of cytokeratin 18 and of actin itself. Cleaves viral precursor proteins (pTP, pIIIa, pVI, pVII, pVIII, and pX) inside newly assembled particles giving rise to mature virions. Protease complexed to its cofactor slides along the viral DNA to specifically locate and cleave the viral precursors. Mature virions have a weakened organization compared to the unmature virions, thereby facilitating subsequent uncoating. Without maturation, the particle lacks infectivity and is unable to uncoat. Late in adenovirus infection, in the cytoplasm, may participate in the cytoskeleton destruction. Cleaves host cell cytoskeletal keratins K7 and K18. This is Protease from Fowl adenovirus A serotype 1 (strain CELO / Phelps) (FAdV-1).